The following is a 542-amino-acid chain: Putative cysteine ligase BshC (542 aa).

A coiled-coil region spans residues 458-479 (LTKNATLLQAQIDFLHQTLQRA).

This sequence belongs to the BshC family.

Involved in bacillithiol (BSH) biosynthesis. May catalyze the last step of the pathway, the addition of cysteine to glucosamine malate (GlcN-Mal) to generate BSH. The polypeptide is Putative cysteine ligase BshC (Geobacillus sp. (strain WCH70)).